An 825-amino-acid polypeptide reads, in one-letter code: Putative pentatricopeptide repeat-containing protein At2g01510 (825 aa).

PPR repeat units follow at residues 47 to 77 (DTCR…MPHK), 78 to 108 (NTVS…MPDR), 109 to 143 (TVVT…SSCT), 146 to 180 (DHVT…GFDT), 183 to 213 (FLTV…IPEK), 214 to 248 (DSVT…GHQP), 249 to 283 (SDFT…GFSR), 284 to 314 (DASV…MPEL), 315 to 349 (DFVS…GFDR), 350 to 384 (RNFP…TADS), 385 to 415 (ILHV…LPQR), 416 to 450 (TTVS…NLRA), 451 to 485 (DQST…GNLE), 486 to 516 (NVFS…MPDR), 517 to 551 (NAVS…GLQP), 552 to 587 (DSVS…GITP), and 588 to 618 (KKKH…MPFE). Positions 623 to 699 (MWSSVLNACR…VPAYSWVEVN (77 aa)) are type E motif. Positions 700–730 (HKIHVFSSNDQTHPNGDEIVRKINELTAEIE) are type E(+) motif. The interval 731 to 825 (REGYKPDTSS…EGVCSCGDYW (95 aa)) is type DYW motif.

It belongs to the PPR family. PCMP-H subfamily.

The protein is Putative pentatricopeptide repeat-containing protein At2g01510 (PCMP-H36) of Arabidopsis thaliana (Mouse-ear cress).